The chain runs to 451 residues: UDP-N-acetylmuramoylalanine--D-glutamate ligase (451 aa).

ATP is bound at residue 118-124 (GTKGKST).

Belongs to the MurCDEF family.

Its subcellular location is the cytoplasm. The enzyme catalyses UDP-N-acetyl-alpha-D-muramoyl-L-alanine + D-glutamate + ATP = UDP-N-acetyl-alpha-D-muramoyl-L-alanyl-D-glutamate + ADP + phosphate + H(+). It functions in the pathway cell wall biogenesis; peptidoglycan biosynthesis. Cell wall formation. Catalyzes the addition of glutamate to the nucleotide precursor UDP-N-acetylmuramoyl-L-alanine (UMA). This is UDP-N-acetylmuramoylalanine--D-glutamate ligase from Borreliella afzelii (strain PKo) (Borrelia afzelii).